The chain runs to 204 residues: Probable 5-formyltetrahydrofolate cyclo-ligase (204 aa).

5–9 (KNQLR) contacts ATP. Residues E57, W102, and 140 to 144 (HGKGY) contribute to the substrate site. ATP is bound by residues 139–146 (GHGKGYYD) and D188.

Belongs to the 5-formyltetrahydrofolate cyclo-ligase family.

It catalyses the reaction (6S)-5-formyl-5,6,7,8-tetrahydrofolate + ATP = (6R)-5,10-methenyltetrahydrofolate + ADP + phosphate. In Schizosaccharomyces pombe (strain 972 / ATCC 24843) (Fission yeast), this protein is Probable 5-formyltetrahydrofolate cyclo-ligase.